Reading from the N-terminus, the 474-residue chain is ATP synthase subunit beta (474 aa).

151-158 (GGAGVGKT) contributes to the ATP binding site.

Belongs to the ATPase alpha/beta chains family. F-type ATPases have 2 components, CF(1) - the catalytic core - and CF(0) - the membrane proton channel. CF(1) has five subunits: alpha(3), beta(3), gamma(1), delta(1), epsilon(1). CF(0) has four main subunits: a(1), b(1), b'(1) and c(9-12).

It localises to the cell inner membrane. The catalysed reaction is ATP + H2O + 4 H(+)(in) = ADP + phosphate + 5 H(+)(out). Functionally, produces ATP from ADP in the presence of a proton gradient across the membrane. The catalytic sites are hosted primarily by the beta subunits. The sequence is that of ATP synthase subunit beta from Roseobacter denitrificans (strain ATCC 33942 / OCh 114) (Erythrobacter sp. (strain OCh 114)).